Consider the following 454-residue polypeptide: N-myc 2 proto-oncogene protein (454 aa).

Disordered stretches follow at residues 133–166 (EKMQ…HSGT), 231–270 (AAPP…EEEE), and 326–374 (SPYV…VRRR). The span at 256-270 (ALSDEVDEEEDEEEE) shows a compositional bias: acidic residues. Positions 363 to 374 (RKSDSEDSVRRR) are enriched in basic and acidic residues. The bHLH domain occupies 371 to 423 (VRRRNHNILERQRRNDLRSSFTTLRDHVPELVKNEKAAKVVILKKACEYVHYL). The tract at residues 423–444 (LQAKEHQLLMEKEKLQARQQQL) is leucine-zipper.

In terms of assembly, efficient DNA binding requires dimerization with another bHLH protein.

Its subcellular location is the nucleus. This Otospermophilus beecheyi (California ground squirrel) protein is N-myc 2 proto-oncogene protein (N-MYC2).